A 228-amino-acid polypeptide reads, in one-letter code: MFSIRMNKVLQGFVCLMLTHRIVGYPMDCKEDQDGTRCPSISLDKLLDRIIQHAELIYRVSEESCTLFEEMYIPSSIRAQLSRGGNACSTRSVPIQGRIQQISDKWLLHSTLVVIQSWTGPLQSLQITMDLYDNAPDGLLNKTKWMSTKLMNLEQGVTVLIRKMLNEDILVSDPSQNLTHFATQPNMVESVLTDYTLLTCFRKDAHRVETFLKLLKCRQSDRLSCFLY.

An N-terminal signal peptide occupies residues 1-24; the sequence is MFSIRMNKVLQGFVCLMLTHRIVG. 3 disulfide bridges follow: Cys-29–Cys-38, Cys-88–Cys-200, and Cys-217–Cys-225. 2 N-linked (GlcNAc...) asparagine glycosylation sites follow: Asn-141 and Asn-177.

The protein belongs to the somatotropin/prolactin family.

It is found in the secreted. The protein is Somatolactin of Anguilla anguilla (European freshwater eel).